Here is a 755-residue protein sequence, read N- to C-terminus: SWI/SNF-related matrix-associated actin-dependent regulator of chromatin subfamily A-like protein 1 (755 aa).

The stretch at serine 7–leucine 27 forms a coiled coil. Disordered stretches follow at residues glutamine 26–serine 91 and serine 104–serine 134. A compositionally biased stretch (polar residues) spans proline 32–serine 63. Serine 63 carries the phosphoserine modification. Residues proline 139–proline 217 enclose the HARP domain. The Helicase ATP-binding domain maps to cysteine 256 to lysine 412. An ATP-binding site is contributed by aspartate 269–threonine 276. The DESH box signature appears at aspartate 361–histidine 364. One can recognise a Helicase C-terminal domain in the interval tyrosine 527 to alanine 681.

Belongs to the SNF2/RAD54 helicase family. SMARCAL1 subfamily.

The protein resides in the nucleus. ATP-dependent annealing helicase that catalyzes the rewinding of the stably unwound DNA. In Drosophila melanogaster (Fruit fly), this protein is SWI/SNF-related matrix-associated actin-dependent regulator of chromatin subfamily A-like protein 1 (Marcal1).